A 513-amino-acid polypeptide reads, in one-letter code: uncharacterized protein (513 aa).

The TRAM domain maps to 3 to 61 (NLKIGQKLQLEIERMGINGEGIGVISGRLVFIPYALPGEEVLVEITENARNFSRAKLVK). Residues Q309, Y338, D359, and D407 each coordinate S-adenosyl-L-methionine. The Nucleophile role is filled by C434.

This sequence belongs to the class I-like SAM-binding methyltransferase superfamily. RNA M5U methyltransferase family.

This is an uncharacterized protein from Lactococcus lactis subsp. lactis (strain IL1403) (Streptococcus lactis).